A 365-amino-acid polypeptide reads, in one-letter code: Sulfate/thiosulfate import ATP-binding protein CysA (365 aa).

Residues 3-237 form the ABC transporter domain; the sequence is IEIANIKKSF…PATRFVLEFM (235 aa). 35–42 contributes to the ATP binding site; the sequence is GPSGSGKT.

It belongs to the ABC transporter superfamily. Sulfate/tungstate importer (TC 3.A.1.6) family. The complex is composed of two ATP-binding proteins (CysA), two transmembrane proteins (CysT and CysW) and a solute-binding protein (CysP).

Its subcellular location is the cell inner membrane. The catalysed reaction is sulfate(out) + ATP + H2O = sulfate(in) + ADP + phosphate + H(+). It catalyses the reaction thiosulfate(out) + ATP + H2O = thiosulfate(in) + ADP + phosphate + H(+). Functionally, part of the ABC transporter complex CysAWTP involved in sulfate/thiosulfate import. Responsible for energy coupling to the transport system. This is Sulfate/thiosulfate import ATP-binding protein CysA from Escherichia coli O157:H7.